The chain runs to 240 residues: Ribonuclease 3 (240 aa).

The region spanning 13–143 (DHASLLEALG…LLGAVHLQHG (131 aa)) is the RNase III domain. Mg(2+) is bound at residue Glu-53. Asp-57 is a catalytic residue. Residues Asp-129 and Glu-132 each contribute to the Mg(2+) site. Residue Glu-132 is part of the active site. Positions 170-238 (DWKTSLQELT…AGAAYQALTA (69 aa)) constitute a DRBM domain.

Belongs to the ribonuclease III family. As to quaternary structure, homodimer. Mg(2+) is required as a cofactor.

The protein resides in the cytoplasm. The catalysed reaction is Endonucleolytic cleavage to 5'-phosphomonoester.. Functionally, digests double-stranded RNA. Involved in the processing of primary rRNA transcript to yield the immediate precursors to the large and small rRNAs (23S and 16S). Processes some mRNAs, and tRNAs when they are encoded in the rRNA operon. Processes pre-crRNA and tracrRNA of type II CRISPR loci if present in the organism. The protein is Ribonuclease 3 of Nocardia farcinica (strain IFM 10152).